The sequence spans 531 residues: ATP synthase subunit beta (531 aa).

Residues 1–48 are disordered; that stretch reads MVKAVTSSKETAKVEKKKSAPRSGVKKAVSKSQAGVKDSSSPVHKSSK. A compositionally biased stretch (basic residues) spans 19 to 29; that stretch reads SAPRSGVKKAV. Residues 30–44 show a composition bias toward polar residues; it reads SKSQAGVKDSSSPVH. Residue 203-210 participates in ATP binding; the sequence is GGAGVGKT.

Belongs to the ATPase alpha/beta chains family. F-type ATPases have 2 components, CF(1) - the catalytic core - and CF(0) - the membrane proton channel. CF(1) has five subunits: alpha(3), beta(3), gamma(1), delta(1), epsilon(1). CF(0) has three main subunits: a(1), b(2) and c(9-12). The alpha and beta chains form an alternating ring which encloses part of the gamma chain. CF(1) is attached to CF(0) by a central stalk formed by the gamma and epsilon chains, while a peripheral stalk is formed by the delta and b chains.

The protein resides in the cell inner membrane. The enzyme catalyses ATP + H2O + 4 H(+)(in) = ADP + phosphate + 5 H(+)(out). In terms of biological role, produces ATP from ADP in the presence of a proton gradient across the membrane. The catalytic sites are hosted primarily by the beta subunits. The chain is ATP synthase subunit beta from Bartonella henselae (strain ATCC 49882 / DSM 28221 / CCUG 30454 / Houston 1) (Rochalimaea henselae).